We begin with the raw amino-acid sequence, 91 residues long: DNA-binding protein HU (91 aa).

The protein belongs to the bacterial histone-like protein family. Homodimer.

Histone-like DNA-binding protein which is capable of wrapping DNA to stabilize it, and thus to prevent its denaturation under extreme environmental conditions. The sequence is that of DNA-binding protein HU (hup) from Streptococcus thermophilus.